Consider the following 153-residue polypeptide: Protein-export protein SecB (153 aa).

The protein belongs to the SecB family. As to quaternary structure, homotetramer, a dimer of dimers. One homotetramer interacts with 1 SecA dimer.

The protein resides in the cytoplasm. Functionally, one of the proteins required for the normal export of preproteins out of the cell cytoplasm. It is a molecular chaperone that binds to a subset of precursor proteins, maintaining them in a translocation-competent state. It also specifically binds to its receptor SecA. This chain is Protein-export protein SecB, found in Erwinia tasmaniensis (strain DSM 17950 / CFBP 7177 / CIP 109463 / NCPPB 4357 / Et1/99).